Here is a 456-residue protein sequence, read N- to C-terminus: Vitamin K-dependent protein C (456 aa).

A signal peptide spans 1 to 20 (MWQLASLSLLLTICGTCSTA). A propeptide spanning residues 21 to 42 (APPGSVFSSSESAHQVLRIRKR) is cleaved from the precursor. The Gla domain occupies 47–88 (LEEIRAGSLERECMEEICDFEEAKEIFQNVDDTLAYWSKYVD). E48, E49, E56, E58, E61, E62, E67, E68, and E71 each carry 4-carboxyglutamate. Residues C59 and C64 are joined by a disulfide bond. 4 disulfide bridges follow: C92/C111, C101/C106, C105/C120, and C122/C131. 2 EGF-like domains span residues 97-132 (PEHACDSPCCGHGSCIDGIGAFHCDCGRGWEGRFCQ) and 136-176 (SYIN…LQCQ). D113 bears the (3R)-3-hydroxyaspartate mark. N-linked (GlcNAc...) asparagine glycosylation is present at N139. Cystine bridges form between C140/C151, C147/C160, C162/C175, C183/C318, and C237/C253. N202 carries an N-linked (GlcNAc...) asparagine glycan. The region spanning 211-445 (LVNGKVTRRG…YLDWIHSHIR (235 aa)) is the Peptidase S1 domain. H252 (charge relay system) is an active-site residue. Residue N289 is glycosylated (N-linked (GlcNAc...) asparagine). The active-site Charge relay system is the D298. An N-linked (GlcNAc...) asparagine glycan is attached at N350. Cystine bridges form between C368-C382 and C393-C421. The Charge relay system role is filled by S397.

It belongs to the peptidase S1 family. As to quaternary structure, synthesized as a single chain precursor, which is cleaved into a light chain and a heavy chain held together by a disulfide bond. The enzyme is then activated by thrombin, which cleaves a tetradecapeptide from the amino end of the heavy chain; this reaction, which occurs at the surface of endothelial cells, is strongly promoted by thrombomodulin. Post-translationally, the vitamin K-dependent, enzymatic carboxylation of some Glu residues allows the modified protein to bind calcium. In terms of processing, the iron and 2-oxoglutarate dependent 3-hydroxylation of aspartate and asparagine is (R) stereospecific within EGF domains. In terms of tissue distribution, plasma; synthesized in the liver.

It is found in the secreted. The protein resides in the golgi apparatus. The protein localises to the endoplasmic reticulum. The enzyme catalyses Degradation of blood coagulation factors Va and VIIIa.. In terms of biological role, protein C is a vitamin K-dependent serine protease that regulates blood coagulation by inactivating factors Va and VIIIa in the presence of calcium ions and phospholipids. Exerts a protective effect on the endothelial cell barrier function. This Canis lupus familiaris (Dog) protein is Vitamin K-dependent protein C (PROC).